Consider the following 129-residue polypeptide: MIVRTTQAITGTERDVAAKDWRSKRIVLADDGVGFSFHETTINANSVSEFHYRHHVEAVWVVEGSGTLTDHETGEEFPLLPGTMYLLDGHERHRVTCHEQLRMLCVFNPPVTGQEVHDESGAYPAPVAS.

Belongs to the ectoine synthase family.

It catalyses the reaction (2S)-4-acetamido-2-aminobutanoate = L-ectoine + H2O. Its pathway is amine and polyamine biosynthesis; ectoine biosynthesis; L-ectoine from L-aspartate 4-semialdehyde: step 3/3. Its function is as follows. Catalyzes the circularization of gamma-N-acetyl-alpha,gamma-diaminobutyric acid (ADABA) to ectoine (1,4,5,6-tetrahydro-2-methyl-4-pyrimidine carboxylic acid), which is an excellent osmoprotectant. The polypeptide is L-ectoine synthase (Mycobacterium sp. (strain KMS)).